The primary structure comprises 261 residues: 5'-nucleotidase SurE (261 aa).

A divalent metal cation is bound by residues aspartate 12, aspartate 13, serine 43, and asparagine 100.

This sequence belongs to the SurE nucleotidase family. A divalent metal cation is required as a cofactor.

It localises to the cytoplasm. It catalyses the reaction a ribonucleoside 5'-phosphate + H2O = a ribonucleoside + phosphate. Functionally, nucleotidase that shows phosphatase activity on nucleoside 5'-monophosphates. The sequence is that of 5'-nucleotidase SurE from Protochlamydia amoebophila (strain UWE25).